Reading from the N-terminus, the 461-residue chain is Coagulation factor IX (461 aa).

Positions 1–28 are cleaved as a signal peptide; sequence MQRVNMIMAESPGLITICLLGYLLSAEC. Residues 29–46 constitute a propeptide that is removed on maturation; that stretch reads TVFLDHENANKILNRPKR. Positions 47, 48, 53, 54, 61, 63, 66, 67, 72, 73, and 76 each coordinate Ca(2+). The Gla domain maps to 47–92; that stretch reads YNSGKLEEFVQGNLERECMEEKCSFEEAREVFENTERTTEFWKQYV. 4-carboxyglutamate occurs at positions 53, 54, 61, 63, 66, 67, 72, 73, 76, 79, and 82. Glu-61 serves as a coordination point for Mg(2+). Cys-64 and Cys-69 are oxidised to a cystine. Glu-66 contributes to the Mg(2+) binding site. Glu-72 provides a ligand contact to Mg(2+). Glu-76 is a binding site for Mg(2+). Glu-82 serves as a coordination point for Ca(2+). Glu-82 is a Mg(2+) binding site. The O-linked (GalNAc...) threonine glycan is linked to Thr-85. Residues Glu-86, Asp-93, Gly-94, and Gln-96 each contribute to the Ca(2+) site. The residue at position 86 (Glu-86) is a 4-carboxyglutamate. Glu-86 provides a ligand contact to Mg(2+). The region spanning 93-129 is the EGF-like 1; calcium-binding domain; that stretch reads DGDQCESNPCLNGGSCKDDINSYECWCPFGFEGKNCE. 10 disulfide bridges follow: Cys-97-Cys-108, Cys-102-Cys-117, Cys-119-Cys-128, Cys-134-Cys-145, Cys-141-Cys-155, Cys-157-Cys-170, Cys-178-Cys-335, Cys-252-Cys-268, Cys-382-Cys-396, and Cys-407-Cys-435. Ser-99 carries an O-linked (Glc...) serine glycan. Ser-107 carries an O-linked (Fuc...) serine glycan. Ca(2+) contacts are provided by Asp-110 and Asp-111. Asp-110 carries the post-translational modification (3R)-3-hydroxyaspartate. Ser-114 bears the Phosphoserine mark. The EGF-like 2 domain occupies 130-171; that stretch reads LDVTCNIKNGRCEQFCKNSADNKVVCSCTEGYRLAENQKSCE. Residues 192 to 226 constitute a propeptide, activation peptide; sequence AETVFPDVDYVNSTEAETILDNITQSTQSFNDFTR. Tyr-201 carries the post-translational modification Sulfotyrosine. The N-linked (GlcNAc...) asparagine glycan is linked to Asn-203. Residue Ser-204 is modified to Phosphoserine. Thr-205 is modified (phosphothreonine; alternate). Thr-205 carries O-linked (GalNAc...) threonine; alternate glycosylation. The N-linked (GlcNAc...) asparagine glycan is linked to Asn-213. O-linked (GalNAc...) threonine glycans are attached at residues Thr-215 and Thr-225. The region spanning 227 to 459 is the Peptidase S1 domain; sequence VVGGEDAKPG…YVNWIKEKTK (233 aa). The active-site Charge relay system is the His-267. 5 residues coordinate Ca(2+): Glu-281, Asn-283, Glu-286, Glu-288, and Glu-291. Residue Asp-315 is the Charge relay system of the active site. Ser-411 acts as the Charge relay system in catalysis.

This sequence belongs to the peptidase S1 family. In terms of assembly, heterodimer of a light chain and a heavy chain; disulfide-linked. Interacts (inactive and activated) with F11 (activated) in calcium-dependent manner. Interacts with SERPINC1. Interacts (activated) with iripin-8, a serine protease inhibitor from Ixodes ricinus saliva. Interacts (inactive and activated) with nitrophorin-2, an anticoagulant protein from Rhodnius prolixus. In terms of processing, activated by factor XIa, which excises the activation peptide. The propeptide can also be removed by snake venom protease. Activated by coagulation factor VIIa-tissue factor (F7-F3) complex in calcium-dependent manner. The iron and 2-oxoglutarate dependent 3-hydroxylation of aspartate and asparagine is (R) stereospecific within EGF domains. In terms of tissue distribution, detected in blood plasma (at protein level). Synthesized primarily in the liver and secreted in plasma.

Its subcellular location is the secreted. It catalyses the reaction Selective cleavage of Arg-|-Ile bond in factor X to form factor Xa.. Functionally, factor IX is a vitamin K-dependent plasma protein that participates in the intrinsic pathway of blood coagulation by converting factor X to its active form in the presence of Ca(2+) ions, phospholipids, and factor VIIIa. This Homo sapiens (Human) protein is Coagulation factor IX (F9).